The sequence spans 370 residues: 2-aminoethylphosphonate--pyruvate transaminase (370 aa).

Lys194 carries the N6-(pyridoxal phosphate)lysine modification.

The protein belongs to the class-V pyridoxal-phosphate-dependent aminotransferase family. PhnW subfamily. Homodimer. It depends on pyridoxal 5'-phosphate as a cofactor.

The catalysed reaction is (2-aminoethyl)phosphonate + pyruvate = phosphonoacetaldehyde + L-alanine. Its function is as follows. Involved in phosphonate degradation. The sequence is that of 2-aminoethylphosphonate--pyruvate transaminase from Paraburkholderia phymatum (strain DSM 17167 / CIP 108236 / LMG 21445 / STM815) (Burkholderia phymatum).